We begin with the raw amino-acid sequence, 374 residues long: Chaperone protein DnaJ (374 aa).

In terms of domain architecture, J spans 5–70 (DYYEVLGISR…SKRAAYDQFG (66 aa)). Residues 129–207 (GKTVKINIPG…CHGQGRVRQE (79 aa)) form a CR-type zinc finger. Positions 142, 145, 159, 162, 181, 184, 195, and 198 each coordinate Zn(2+). CXXCXGXG motif repeat units follow at residues 142–149 (CEACDGSG), 159–166 (CGTCQGMG), 181–188 (CPTCRGSG), and 195–202 (CKSCHGQG). The interval 216 to 238 (PGVDTGDRIRLSGEGEMGVDGGP) is disordered.

Belongs to the DnaJ family. In terms of assembly, homodimer. It depends on Zn(2+) as a cofactor.

Its subcellular location is the cytoplasm. In terms of biological role, participates actively in the response to hyperosmotic and heat shock by preventing the aggregation of stress-denatured proteins and by disaggregating proteins, also in an autonomous, DnaK-independent fashion. Unfolded proteins bind initially to DnaJ; upon interaction with the DnaJ-bound protein, DnaK hydrolyzes its bound ATP, resulting in the formation of a stable complex. GrpE releases ADP from DnaK; ATP binding to DnaK triggers the release of the substrate protein, thus completing the reaction cycle. Several rounds of ATP-dependent interactions between DnaJ, DnaK and GrpE are required for fully efficient folding. Also involved, together with DnaK and GrpE, in the DNA replication of plasmids through activation of initiation proteins. The sequence is that of Chaperone protein DnaJ from Marinobacter nauticus (strain ATCC 700491 / DSM 11845 / VT8) (Marinobacter aquaeolei).